A 465-amino-acid chain; its full sequence is MVSSQKLEKPIEMGSSEPLPIADGDRRRKKKRRGRATDSLPGKFEDMYKLTSELLGEGAYAKVQGAVSLQNGKEYAVKIIEKQAGHSRSRVFREVETLYQCQGNKNILELIEFFEDDTRFYLVFEKLQGGSILAHIQKQKHFNEREASRVVRDVAAALDFLHTKDKVSLCHLGWSAMAPSGLTAAPTSLGSSDPPTSASQVAGTTGIAHRDLKPENILCESPEKVSPVKICDFDLGSGMKLNNSCTPITTPELTTPCGSAEYMAPEVVEVFTDQATFYDKRCDLWSLGVVLYIMLSGYPPFVGHCGADCGWDRGEVCRVCQNKLFESIQEGKYEFPDKDWAHISSEAKDLISKLLVRDAKQRLSAAQVLQHPWVQGQAPEKGLPTPQVLQRNSSTMDLTLFAAEAIALNRQLSQHEENELAEEPEALADGLCSMKLSPPCKSRLARRRALAQAGRGEDRSPPTAL.

A compositionally biased stretch (basic and acidic residues) spans 1-11 (MVSSQKLEKPI). The interval 1-40 (MVSSQKLEKPIEMGSSEPLPIADGDRRRKKKRRGRATDSL) is disordered. Position 39 is a phosphoserine (S39). The region spanning 49–374 (KLTSELLGEG…AAQVLQHPWV (326 aa)) is the Protein kinase domain. Residues 55 to 63 (LGEGAYAKV) and K78 each bind ATP. Residues 185–203 (APTSLGSSDPPTSASQVAG) show a composition bias toward polar residues. A disordered region spans residues 185–204 (APTSLGSSDPPTSASQVAGT). D211 acts as the Proton acceptor in catalysis. 2 positions are modified to phosphoserine: S221 and S226. Residues T250, T255, and T385 each carry the phosphothreonine modification. Residues 446–465 (RRRALAQAGRGEDRSPPTAL) are disordered. Residues 455–465 (RGEDRSPPTAL) show a composition bias toward basic and acidic residues. Position 460 is a phosphoserine (S460).

The protein belongs to the protein kinase superfamily. CAMK Ser/Thr protein kinase family. In terms of assembly, interacts with the C-terminal regions of EIF4G1 and EIF4G2. Also binds to dephosphorylated ERK1 and ERK2, and to the p38 kinases. Requires Mg(2+) as cofactor. Dual phosphorylation of Thr-250 and Thr-255 activates the kinase. Phosphorylation of Thr-385 activates the kinase. MAPK3/ERK1 is one of the kinases which activate MKNK1/MNK1. Phosphorylation by PAK2 leads to a reduced phosphorylation of EIF4G1. Ubiquitous.

The protein resides in the cytoplasm. It is found in the nucleus. It carries out the reaction L-seryl-[protein] + ATP = O-phospho-L-seryl-[protein] + ADP + H(+). The enzyme catalyses L-threonyl-[protein] + ATP = O-phospho-L-threonyl-[protein] + ADP + H(+). Phosphorylated and activated by the p38 kinases and kinases in the Erk pathway. Functionally, may play a role in the response to environmental stress and cytokines. Appears to regulate translation by phosphorylating EIF4E, thus increasing the affinity of this protein for the 7-methylguanosine-containing mRNA cap. This chain is MAP kinase-interacting serine/threonine-protein kinase 1 (MKNK1), found in Homo sapiens (Human).